The following is a 344-amino-acid chain: Methionine import ATP-binding protein MetN (344 aa).

The ABC transporter domain maps to 2–241 (IEINRVNKVF…PKTELARKFI (240 aa)). Position 38–45 (38–45 (GSSGAGKS)) interacts with ATP.

Belongs to the ABC transporter superfamily. Methionine importer (TC 3.A.1.24) family. The complex is composed of two ATP-binding proteins (MetN), two transmembrane proteins (MetI) and a solute-binding protein (MetQ).

The protein resides in the cell inner membrane. The catalysed reaction is L-methionine(out) + ATP + H2O = L-methionine(in) + ADP + phosphate + H(+). The enzyme catalyses D-methionine(out) + ATP + H2O = D-methionine(in) + ADP + phosphate + H(+). Functionally, part of the ABC transporter complex MetNIQ involved in methionine import. Responsible for energy coupling to the transport system. The chain is Methionine import ATP-binding protein MetN from Photobacterium profundum (strain SS9).